A 262-amino-acid chain; its full sequence is Short-chain Z-isoprenyl diphosphate synthase (262 aa).

Residue Asp-40 is part of the active site. Asp-40 serves as a coordination point for Mg(2+). Residues 41–44 (GNRR), Trp-45, and 86–88 (STE) contribute to the substrate site. Asn-89 functions as the Proton acceptor in the catalytic mechanism. Residues Arg-92, Arg-211, and 217–219 (RLS) each bind substrate. Position 230 (Glu-230) interacts with Mg(2+).

Belongs to the UPP synthase family. Z-FPP synthase subfamily. The cofactor is Mg(2+).

It catalyses the reaction isopentenyl diphosphate + (2E)-geranyl diphosphate = (2Z,6E)-farnesyl diphosphate + diphosphate. It participates in phospholipid metabolism; decaprenyl phosphate biosynthesis. Functionally, generates Z-farnesyl diphosphate (Z-FPP) from isopentenyl pyrophosphate (IPP). Z-FPP is the precursor of decaprenyl diphosphate, which has a central role in the biosynthesis of the mycobacterial cell wall. The sequence is that of Short-chain Z-isoprenyl diphosphate synthase from Mycobacterium bovis (strain ATCC BAA-935 / AF2122/97).